The chain runs to 617 residues: Probable Xaa-Pro aminopeptidase P (617 aa).

Residues Asp-414, Asp-425, Glu-523, and Glu-537 each contribute to the Mn(2+) site.

It belongs to the peptidase M24B family. Mn(2+) is required as a cofactor.

It carries out the reaction Release of any N-terminal amino acid, including proline, that is linked to proline, even from a dipeptide or tripeptide.. Its function is as follows. Catalyzes the removal of a penultimate prolyl residue from the N-termini of peptides. This Colletotrichum graminicola (strain M1.001 / M2 / FGSC 10212) (Maize anthracnose fungus) protein is Probable Xaa-Pro aminopeptidase P (AMPP).